A 506-amino-acid chain; its full sequence is ATP synthase subunit alpha, mitochondrial (506 aa).

Residue 171 to 178 coordinates ATP; the sequence is GDRQTGKT.

This sequence belongs to the ATPase alpha/beta chains family. In terms of assembly, F-type ATPases have 2 components, CF(1) - the catalytic core - and CF(0) - the membrane proton channel. CF(1) has five subunits: alpha(3), beta(3), gamma(1), delta(1), epsilon(1). CF(0) has three main subunits: a, b and c.

The protein localises to the mitochondrion. It localises to the mitochondrion inner membrane. Its function is as follows. Mitochondrial membrane ATP synthase (F(1)F(0) ATP synthase or Complex V) produces ATP from ADP in the presence of a proton gradient across the membrane which is generated by electron transport complexes of the respiratory chain. F-type ATPases consist of two structural domains, F(1) - containing the extramembraneous catalytic core, and F(0) - containing the membrane proton channel, linked together by a central stalk and a peripheral stalk. During catalysis, ATP synthesis in the catalytic domain of F(1) is coupled via a rotary mechanism of the central stalk subunits to proton translocation. Subunits alpha and beta form the catalytic core in F(1). Rotation of the central stalk against the surrounding alpha(3)beta(3) subunits leads to hydrolysis of ATP in three separate catalytic sites on the beta subunits. Subunit alpha does not bear the catalytic high-affinity ATP-binding sites. This chain is ATP synthase subunit alpha, mitochondrial (ATPA), found in Beta vulgaris (Sugar beet).